Consider the following 184-residue polypeptide: Probable RNA 2'-phosphotransferase (184 aa).

This sequence belongs to the KptA/TPT1 family.

Its function is as follows. Removes the 2'-phosphate from RNA via an intermediate in which the phosphate is ADP-ribosylated by NAD followed by a presumed transesterification to release the RNA and generate ADP-ribose 1''-2''-cyclic phosphate (APPR&gt;P). May function as an ADP-ribosylase. This chain is Probable RNA 2'-phosphotransferase, found in Rhodopirellula baltica (strain DSM 10527 / NCIMB 13988 / SH1).